A 232-amino-acid polypeptide reads, in one-letter code: RNA chaperone ProQ (232 aa).

The interval 105–182 (EAKARVQAQR…REEQHTPVSD (78 aa)) is disordered. The segment covering 117–136 (QQAKKREAAAAAGEKEDAPR) has biased composition (basic and acidic residues). Positions 137–146 (RERKPRPTTP) are enriched in basic residues. A compositionally biased stretch (basic and acidic residues) spans 147 to 177 (RRKEGAERKPRSQKPVEKAPKTVKAPREEQH).

The protein belongs to the ProQ family.

Its subcellular location is the cytoplasm. Its function is as follows. RNA chaperone with significant RNA binding, RNA strand exchange and RNA duplexing activities. May regulate ProP activity through an RNA-based, post-transcriptional mechanism. The protein is RNA chaperone ProQ of Escherichia coli (strain UTI89 / UPEC).